A 185-amino-acid chain; its full sequence is Capsid protein (185 aa).

Positions 136–185 (NAPILSTLPETTVVRRRDRGRSPRRRTPSPRRRRSQSPRRRRSQSRESQC) are disordered. Over residues 149-178 (VRRRDRGRSPRRRTPSPRRRRSQSPRRRRS) the composition is skewed to basic residues. S157, S164, and S172 each carry phosphoserine; by host. The stretch at 157-163 (SPRRRTP) is one 1; half-length repeat. Residues 157–179 (SPRRRTPSPRRRRSQSPRRRRSQ) form a 3 X 8 AA repeats of S-P-R-R-R-[PR]-S-Q region. The Bipartite nuclear localization signal motif lies at 160–177 (RRTPSPRRRRSQSPRRRR). 2 tandem repeats follow at residues 164 to 171 (SPRRRRSQ) and 172 to 179 (SPRRRRSQ). Residues 179-185 (QSRESQC) form an RNA binding region.

It belongs to the orthohepadnavirus core antigen family. As to quaternary structure, homodimerizes, then multimerizes. Interacts with cytosol exposed regions of viral L glycoprotein present in the reticulum-to-Golgi compartment. Interacts with human FLNB. Phosphorylated form interacts with host importin alpha; this interaction depends on the exposure of the NLS, which itself depends upon genome maturation and/or phosphorylation of the capsid protein. Interacts with host NUP153. In terms of processing, phosphorylated by host SRPK1, SRPK2, and maybe protein kinase C or GAPDH. Phosphorylation is critical for pregenomic RNA packaging. Protein kinase C phosphorylation is stimulated by HBx protein and may play a role in transport of the viral genome to the nucleus at the late step during the viral replication cycle.

It is found in the virion. It localises to the host cytoplasm. Self assembles to form an icosahedral capsid. Most capsids appear to be large particles with an icosahedral symmetry of T=4 and consist of 240 copies of capsid protein, though a fraction forms smaller T=3 particles consisting of 180 capsid proteins. Entering capsids are transported along microtubules to the nucleus. Phosphorylation of the capsid is thought to induce exposure of nuclear localization signal in the C-terminal portion of the capsid protein that allows binding to the nuclear pore complex via the importin (karyopherin-) alpha and beta. Capsids are imported in intact form through the nuclear pore into the nuclear basket, where it probably binds NUP153. Only capsids that contain the mature viral genome can release the viral DNA and capsid protein into the nucleoplasm. Immature capsids get stuck in the basket. Capsids encapsulate the pre-genomic RNA and the P protein. Pre-genomic RNA is reverse-transcribed into DNA while the capsid is still in the cytoplasm. The capsid can then either be directed to the nucleus, providing more genomes for transcription, or bud through the endoplasmic reticulum to provide new virions. This is Capsid protein from Homo sapiens (Human).